The following is a 211-amino-acid chain: Large ribosomal subunit protein bL17c (211 aa).

The transit peptide at 1-95 (MAIPMSMAMA…IVDGGGRIYA (95 aa)) directs the protein to the chloroplast.

The protein belongs to the bacterial ribosomal protein bL17 family. Part of the 50S ribosomal subunit.

Its subcellular location is the plastid. It localises to the chloroplast. In terms of biological role, this protein binds directly to 23S ribosomal RNA. This chain is Large ribosomal subunit protein bL17c (RPL17), found in Arabidopsis thaliana (Mouse-ear cress).